A 1341-amino-acid polypeptide reads, in one-letter code: Aldehyde oxidase 4 (1341 aa).

Residues 8-95 (DELIFFVNGK…GAAVTTVEGV (88 aa)) form the 2Fe-2S ferredoxin-type domain. Residues Cys-47, Cys-52, Cys-55, and Cys-77 each contribute to the [2Fe-2S] cluster site. A Mo-molybdopterin-binding site is contributed by Gln-116. [2Fe-2S] cluster-binding residues include Cys-117, Cys-120, Cys-152, and Cys-154. Cys-154 contacts Mo-molybdopterin. Residues 239–424 (FQGERTTWLA…LSVFIPYSSQ (186 aa)) enclose the FAD-binding PCMH-type domain. FAD-binding positions include 267–274 (LIMGNTTV), Ala-348, Thr-357, His-361, Asp-370, and Val-414. Residues Ala-805, 805–806 (AF), Leu-1046, 1087–1090 (GSMG), Gln-1202, and Leu-1266 contribute to the Mo-molybdopterin site. Residue Glu-1268 is the Proton acceptor; for azaheterocycle hydroxylase activity of the active site.

This sequence belongs to the xanthine dehydrogenase family. As to quaternary structure, homodimer. [2Fe-2S] cluster is required as a cofactor. Requires FAD as cofactor. It depends on Mo-molybdopterin as a cofactor. Detected in liver, testis, kidney, brain, Harderian gland and olfactory mucosa.

It localises to the cytoplasm. The catalysed reaction is an aldehyde + O2 + H2O = a carboxylate + H2O2 + H(+). The enzyme catalyses retinal + O2 + H2O = retinoate + H2O2 + H(+). Its function is as follows. Aldehyde oxidase able to catalyze the oxidation of retinaldehyde into retinoate. Acts as a negative modulator of the epidermal trophism. May be able to oxidize a wide variety of aldehydes into their corresponding carboxylates and to hydroxylate azaheterocycles. In Cavia porcellus (Guinea pig), this protein is Aldehyde oxidase 4 (AOX4).